The sequence spans 532 residues: Probable pectinesterase/pectinesterase inhibitor 39 (532 aa).

The signal sequence occupies residues 1 to 34 (MINNHPIREKPKHIIFNLLSLIFFLIFLSTVVSS). Residues 35 to 169 (QSPSYTTHKT…ENLKEIILDI (135 aa)) are pectinesterase inhibitor 39. N-linked (GlcNAc...) asparagine glycans are attached at residues Asn62, Asn74, Asn85, Asn172, Asn221, Asn231, Asn244, and Asn287. Positions 221-518 (NLSVAIDGTG…FTVGPFIDGS (298 aa)) are pectinesterase 39. Substrate is bound by residues Thr296 and Gln326. Asp349 functions as the Proton donor; for pectinesterase activity in the catalytic mechanism. The Nucleophile; for pectinesterase activity role is filled by Asp370. Residues Asn382 and Asn404 are each glycosylated (N-linked (GlcNAc...) asparagine). The substrate site is built by Arg438 and Trp440. N-linked (GlcNAc...) asparagine glycosylation is found at Asn502 and Asn522.

In the N-terminal section; belongs to the PMEI family. The protein in the C-terminal section; belongs to the pectinesterase family. Expressed in siliques but not in flower buds.

The protein localises to the secreted. Its subcellular location is the cell wall. The catalysed reaction is [(1-&gt;4)-alpha-D-galacturonosyl methyl ester](n) + n H2O = [(1-&gt;4)-alpha-D-galacturonosyl](n) + n methanol + n H(+). It functions in the pathway glycan metabolism; pectin degradation; 2-dehydro-3-deoxy-D-gluconate from pectin: step 1/5. Its function is as follows. Acts in the modification of cell walls via demethylesterification of cell wall pectin. The protein is Probable pectinesterase/pectinesterase inhibitor 39 (PME39) of Arabidopsis thaliana (Mouse-ear cress).